The following is a 185-amino-acid chain: Stathmin-4 (185 aa).

Residues 48–185 (SDMEVIELNK…EVRKNKEATR (138 aa)) form the SLD domain. Positions 90-185 (SLEEIQKKLE…EVRKNKEATR (96 aa)) form a coiled coil. The segment at 165–185 (ERLQEKDKHAEEVRKNKEATR) is disordered. Basic and acidic residues predominate over residues 166–185 (RLQEKDKHAEEVRKNKEATR).

The protein belongs to the stathmin family. As to expression, nervous tissue.

This Xenopus laevis (African clawed frog) protein is Stathmin-4 (stmn4).